The chain runs to 554 residues: Solute carrier family 22 member 1 (554 aa).

Residues 1–24 (MPSVDDVLEQVGEFGWFQKQAFLN) are Cytoplasmic-facing. The chain crosses the membrane as a helical span at residues 25-45 (LCLTSVAFAPIYVGIVFLGFT). The Extracellular segment spans residues 46 to 234 (PDHRCRSPGV…EFVGLGYRKT (189 aa)). N-linked (GlcNAc...) asparagine glycosylation occurs at N71. Residues 235–255 (VAILYQTAFSVGLVLLSGLAY) traverse the membrane as a helical segment. The Cytoplasmic portion of the chain corresponds to 256–261 (AVPHWR). Residues 262 to 282 (SLQLAVSLPIFLLLLCYWFVP) form a helical membrane-spanning segment. Positions 282 to 286 (PESPR) match the Proline-rich sequence motif. At 283–347 (ESPRWLLSQK…FRTQNLRKYT (65 aa)) the chain is on the extracellular side. Position 333 is a phosphoserine (S333). A helical membrane pass occupies residues 348 to 368 (FILMYLWFTSSVLYQGLIMHV). Residues 369 to 376 (GATGGSLY) are Cytoplasmic-facing. A helical membrane pass occupies residues 377–397 (LDFLYSALVEFPAAFVILLII). Residues 398–402 (DRFGR) lie on the Extracellular side of the membrane. A helical membrane pass occupies residues 403–423 (LYLLAGSNLLAGAACFFMIFI). The Cytoplasmic portion of the chain corresponds to 424-431 (SHDLHWLS). The chain crosses the membrane as a helical span at residues 432-452 (IVAACIGRMGITIVFQMVCLV). The Extracellular segment spans residues 453-464 (SAELYPTFIRNL). The chain crosses the membrane as a helical span at residues 465 to 485 (GVMVCSSLCDLGGVVAPFLVF). At 486 to 492 (RLTEVWR) the chain is on the cytoplasmic side. Residues 493 to 513 (GLPLVLFAALGLVAGGMSLLL) traverse the membrane as a helical segment. Residues 514–554 (PETKGVALPETIEEVERLGRKAKPRDNMIYLQVKMPEPAGL) lie on the Extracellular side of the membrane.

It belongs to the major facilitator (TC 2.A.1) superfamily. Organic cation transporter (TC 2.A.1.19) family. Post-translationally, phosphorylated.

The protein localises to the basolateral cell membrane. The protein resides in the apical cell membrane. It is found in the lateral cell membrane. It localises to the basal cell membrane. Its subcellular location is the cell membrane. It carries out the reaction 1-methylnicotinamide(out) = 1-methylnicotinamide(in). It catalyses the reaction dopamine(out) = dopamine(in). The enzyme catalyses serotonin(out) = serotonin(in). The catalysed reaction is (R)-adrenaline(out) = (R)-adrenaline(in). It carries out the reaction (R)-noradrenaline(out) = (R)-noradrenaline(in). It catalyses the reaction histamine(out) = histamine(in). The enzyme catalyses guanidine(out) = guanidine(in). The catalysed reaction is choline(out) = choline(in). It carries out the reaction acetylcholine(in) = acetylcholine(out). It catalyses the reaction thiamine(in) = thiamine(out). The enzyme catalyses spermidine(in) = spermidine(out). The catalysed reaction is agmatine(out) = agmatine(in). It carries out the reaction putrescine(out) = putrescine(in). It catalyses the reaction (R)-carnitine(in) = (R)-carnitine(out). The enzyme catalyses O-isobutanoyl-(R)-carnitine(in) = O-isobutanoyl-(R)-carnitine(out). The catalysed reaction is O-acetyl-(R)-carnitine(in) = O-acetyl-(R)-carnitine(out). It carries out the reaction O-3-hydroxybutanoyl-(R)-carnitine(in) = O-3-hydroxybutanoyl-(R)-carnitine(out). It catalyses the reaction O-propanoyl-(R)-carnitine(in) = O-propanoyl-(R)-carnitine(out). The enzyme catalyses O-butanoyl-(R)-carnitine(in) = O-butanoyl-(R)-carnitine(out). The catalysed reaction is O-2-methylbutanoyl-(R)-carnitine(in) = O-2-methylbutanoyl-(R)-carnitine(out). It carries out the reaction O-3-methylbutanoyl-(R)-carnitine(in) = O-3-methylbutanoyl-(R)-carnitine(out). It catalyses the reaction O-hexanoyl-(R)-carnitine(in) = O-hexanoyl-(R)-carnitine(out). The enzyme catalyses L-histidyl-L-proline diketopiperazine(in) = L-histidyl-L-proline diketopiperazine(out). The catalysed reaction is (R)-salsolinol(in) = (R)-salsolinol(out). It carries out the reaction prostaglandin F2alpha(out) = prostaglandin F2alpha(in). It catalyses the reaction prostaglandin E2(out) = prostaglandin E2(in). With respect to regulation, phosphorylation of the transporter leads to changes in its substrate affinity, resulting in a regulation of the transport activity. In contrast with rat ortholog, ASP uptake is inhibited by protein kinase A (PKA) and C (PKC) activation. ASP uptake is also endogenously activated by calmodulin, the calmodulin-dependent kinase II and LCK tyrosine kinase. Inhibited by cGMP, most likely through a cGMP-binding protein that interacts with OCT1. In terms of biological role, electrogenic voltage-dependent transporter that mediates the transport of a variety of organic cations such as endogenous bioactive amines, cationic drugs and xenobiotics. Functions as a pH- and Na(+)-independent, bidirectional transporter. Cation cellular uptake or release is driven by the electrochemical potential (i.e. membrane potential and concentration gradient) and substrate selectivity. Hydrophobicity is a major requirement for recognition in polyvalent substrates and inhibitors. Primarily expressed in the basolateral membrane of hepatocytes and proximal tubules and involved in the uptake and disposition of cationic compounds from the blood by hepatic and renal clearance. Most likely functions as an uptake carrier in enterocytes contributing to the intestinal elimination of organic cations from the systemic circulation. Transports endogenous monoamines such as N-1-methylnicotinamide (NMN), guanidine, neurotransmitters dopamine, serotonin, noradrenaline, adrenaline and histamine, and quaternary ammonium compound such as choline. Also transports natural polyamines such as spermidine, agmatine and putrescine at low affinity, but relatively high turnover. Involved in the hepatic and intestinal uptake of the vitamin B1/thiamine, hence regulating hepatic lipid and energy metabolism. Contributes to the influx and efflux of fatty acid carriers carnitines and acylcarnitines across the basolateral membrane of hepatocytes, from the liver to the systemic circulation and inversely and may be involved in regulating the systemic availability of hepatic acylcarnitines. Also capable of transporting non-amine endogenous compounds such as prostaglandin E2 (PGE2) and prostaglandin F2-alpha (PGF2-alpha). May contribute to the transport of cationic compounds in testes across the blood-testis-barrier. Also mediates the uptake of xenobiotics tributylmethylammonium (TBuMA), quinidine, N-methyl-quinine (NMQ), N-methyl-quinidine (NMQD) N-(4,4-azo-n-pentyl)-quinuclidine (APQ), azidoprocainamide methoiodide (AMP), N-(4,4-azo-n-pentyl)-21-deoxyajmalinium (APDA) and 4-(4-(dimethylamino)styryl)-N-methylpyridinium (ASP). The sequence is that of Solute carrier family 22 member 1 (SLC22A1) from Sus scrofa (Pig).